The sequence spans 207 residues: Outer-membrane lipoprotein LolB (207 aa).

Positions 1 to 21 (MPLPDFRLIRLLPLAALVLTA) are cleaved as a signal peptide. Cysteine 22 is lipidated: N-palmitoyl cysteine. Residue cysteine 22 is the site of S-diacylglycerol cysteine attachment.

This sequence belongs to the LolB family. In terms of assembly, monomer.

The protein resides in the cell outer membrane. In terms of biological role, plays a critical role in the incorporation of lipoproteins in the outer membrane after they are released by the LolA protein. In Escherichia coli (strain K12 / MC4100 / BW2952), this protein is Outer-membrane lipoprotein LolB.